We begin with the raw amino-acid sequence, 335 residues long: Flagellar P-ring protein (335 aa).

The N-terminal stretch at Met-1 to Ala-17 is a signal peptide.

It belongs to the FlgI family. In terms of assembly, the basal body constitutes a major portion of the flagellar organelle and consists of four rings (L,P,S, and M) mounted on a central rod.

The protein localises to the periplasm. It is found in the bacterial flagellum basal body. Assembles around the rod to form the L-ring and probably protects the motor/basal body from shearing forces during rotation. This chain is Flagellar P-ring protein, found in Borreliella burgdorferi (strain ZS7) (Borrelia burgdorferi).